A 233-amino-acid polypeptide reads, in one-letter code: Orotidine 5'-phosphate decarboxylase (233 aa).

Substrate contacts are provided by residues Asp11, Lys34, 61-70 (DLKLHDIPNT), Thr117, Arg179, Gln188, Gly208, and Arg209. Lys63 functions as the Proton donor in the catalytic mechanism.

The protein belongs to the OMP decarboxylase family. Type 1 subfamily. In terms of assembly, homodimer.

The catalysed reaction is orotidine 5'-phosphate + H(+) = UMP + CO2. It participates in pyrimidine metabolism; UMP biosynthesis via de novo pathway; UMP from orotate: step 2/2. Catalyzes the decarboxylation of orotidine 5'-monophosphate (OMP) to uridine 5'-monophosphate (UMP). This is Orotidine 5'-phosphate decarboxylase from Streptococcus pneumoniae serotype 4 (strain ATCC BAA-334 / TIGR4).